The chain runs to 505 residues: MAEFQGYLELDRSWKHDLLYPLIFREYIYVFAHDLGLNRSNLLENVGYDNKSSLLIVKRLISRMYQQNHFIISANDSNQNQLFGYNKNLYSQMISEGFAVIVEIPFSLRLVSSLKGTEIVKYYNLRSIHSIFPFLEDKFSQLNYVSDVLIPYPIHLEILVQTLRYWVKDASSLHLLRFFLHDYYNWNTLIIPNKYISIFSKSNPRLFLFLYNSHVCEYESILLFLRNQSSHLRLTSSGGFFERIYFYGKIKHPVEEVFANDSPTSLWFLEDLFMHYVRYQGKSILASKDTPLFMNKWKYYLVLLWQCHFYVWSQPGRMYINQLCKHSFSFLGYLSSMQINLSVVRSQMLENSFLMDNAMKKIDTLVPISLLIGSLDKMKFCNVLGHPVSKSTWADSSDFDIIDRFVCICRNLFHYYSGSSKKKSLYRIKYILRLSCVKTLARKPKSTVRTFLKKLGSNLLEEFFTEEEKVLSLIFPRTYSALRRSYKGRIWDLDIFCINDLVNHK.

The protein belongs to the intron maturase 2 family. MatK subfamily.

It is found in the plastid. It localises to the chloroplast. Functionally, usually encoded in the trnK tRNA gene intron. Probably assists in splicing its own and other chloroplast group II introns. The protein is Maturase K of Morus alba (White mulberry).